The sequence spans 347 residues: Large ribosomal subunit protein uL10 (347 aa).

A disordered region spans residues 310–347 (ATVAAPAAEEEKKEEEPEEEEEDHAEEDGMAGLGALFG). The segment covering 325–338 (EPEEEEEDHAEEDG) has biased composition (acidic residues).

It belongs to the universal ribosomal protein uL10 family. As to quaternary structure, part of the 50S ribosomal subunit. Forms part of the ribosomal stalk which helps the ribosome interact with GTP-bound translation factors. Forms a heptameric L10(L12)2(L12)2(L12)2 complex, where L10 forms an elongated spine to which the L12 dimers bind in a sequential fashion.

Forms part of the ribosomal stalk, playing a central role in the interaction of the ribosome with GTP-bound translation factors. This Methanosarcina mazei (strain ATCC BAA-159 / DSM 3647 / Goe1 / Go1 / JCM 11833 / OCM 88) (Methanosarcina frisia) protein is Large ribosomal subunit protein uL10.